The sequence spans 185 residues: Peptidyl-tRNA hydrolase (185 aa).

Tyrosine 14 is a binding site for tRNA. Histidine 19 (proton acceptor) is an active-site residue. 3 residues coordinate tRNA: tyrosine 64, asparagine 66, and asparagine 112.

It belongs to the PTH family. As to quaternary structure, monomer.

It localises to the cytoplasm. The catalysed reaction is an N-acyl-L-alpha-aminoacyl-tRNA + H2O = an N-acyl-L-amino acid + a tRNA + H(+). In terms of biological role, hydrolyzes ribosome-free peptidyl-tRNAs (with 1 or more amino acids incorporated), which drop off the ribosome during protein synthesis, or as a result of ribosome stalling. Functionally, catalyzes the release of premature peptidyl moieties from peptidyl-tRNA molecules trapped in stalled 50S ribosomal subunits, and thus maintains levels of free tRNAs and 50S ribosomes. This chain is Peptidyl-tRNA hydrolase, found in Exiguobacterium sibiricum (strain DSM 17290 / CCUG 55495 / CIP 109462 / JCM 13490 / 255-15).